Here is a 505-residue protein sequence, read N- to C-terminus: uncharacterized protein (505 aa).

The Radical SAM core domain maps to 193 to 440 (CTNKKCNLCE…LEIKKKYIGR (248 aa)). Residues Cys-208, Cys-216, and Cys-219 each coordinate [4Fe-4S] cluster. The TRAM domain maps to 435-499 (KKYIGRVLEV…EKYLEGRILK (65 aa)).

It depends on [4Fe-4S] cluster as a cofactor.

This is an uncharacterized protein from Methanocaldococcus jannaschii (strain ATCC 43067 / DSM 2661 / JAL-1 / JCM 10045 / NBRC 100440) (Methanococcus jannaschii).